The chain runs to 126 residues: Holo-[acyl-carrier-protein] synthase (126 aa).

D9 and E58 together coordinate Mg(2+).

This sequence belongs to the P-Pant transferase superfamily. AcpS family. Mg(2+) serves as cofactor.

It is found in the cytoplasm. It catalyses the reaction apo-[ACP] + CoA = holo-[ACP] + adenosine 3',5'-bisphosphate + H(+). Functionally, transfers the 4'-phosphopantetheine moiety from coenzyme A to a Ser of acyl-carrier-protein. The polypeptide is Holo-[acyl-carrier-protein] synthase (Escherichia coli (strain ATCC 8739 / DSM 1576 / NBRC 3972 / NCIMB 8545 / WDCM 00012 / Crooks)).